Consider the following 470-residue polypeptide: Glutamate--tRNA ligase (470 aa).

The 'HIGH' region motif lies at 15–25 (PSPTGFLHIGG). Residues 240–244 (KLSKR) carry the 'KMSKS' region motif. Lysine 243 is an ATP binding site.

Belongs to the class-I aminoacyl-tRNA synthetase family. Glutamate--tRNA ligase type 1 subfamily. Monomer.

The protein localises to the cytoplasm. The enzyme catalyses tRNA(Glu) + L-glutamate + ATP = L-glutamyl-tRNA(Glu) + AMP + diphosphate. In terms of biological role, catalyzes the attachment of glutamate to tRNA(Glu) in a two-step reaction: glutamate is first activated by ATP to form Glu-AMP and then transferred to the acceptor end of tRNA(Glu). The protein is Glutamate--tRNA ligase of Caulobacter vibrioides (strain ATCC 19089 / CIP 103742 / CB 15) (Caulobacter crescentus).